Here is a 336-residue protein sequence, read N- to C-terminus: uncharacterized protein (336 aa).

Positions 39 and 166 each coordinate NADP(+).

Belongs to the NAD(P)-dependent epimerase/dehydratase family. Dihydroflavonol-4-reductase subfamily.

The protein localises to the cytoplasm. Its subcellular location is the nucleus. This is an uncharacterized protein from Schizosaccharomyces pombe (strain 972 / ATCC 24843) (Fission yeast).